A 78-amino-acid chain; its full sequence is NAD(P)H-quinone oxidoreductase subunit O (78 aa).

The protein belongs to the complex I NdhO subunit family. In terms of assembly, NDH-1 can be composed of about 15 different subunits; different subcomplexes with different compositions have been identified which probably have different functions.

It localises to the cellular thylakoid membrane. The catalysed reaction is a plastoquinone + NADH + (n+1) H(+)(in) = a plastoquinol + NAD(+) + n H(+)(out). The enzyme catalyses a plastoquinone + NADPH + (n+1) H(+)(in) = a plastoquinol + NADP(+) + n H(+)(out). Its function is as follows. NDH-1 shuttles electrons from an unknown electron donor, via FMN and iron-sulfur (Fe-S) centers, to quinones in the respiratory and/or the photosynthetic chain. The immediate electron acceptor for the enzyme in this species is believed to be plastoquinone. Couples the redox reaction to proton translocation, and thus conserves the redox energy in a proton gradient. Cyanobacterial NDH-1 also plays a role in inorganic carbon-concentration. In Prochlorococcus marinus (strain AS9601), this protein is NAD(P)H-quinone oxidoreductase subunit O.